The following is a 340-amino-acid chain: Probable HTH-type transcriptional regulator EndR (340 aa).

Positions 1 to 58 (MVTTMKEVAERAGVSKSTVSQFLQKRYNYMSENTKKKIEQAIEDLSYIPNEVARSLKQ) constitute an HTH lacI-type domain. Positions 5–24 (MKEVAERAGVSKSTVSQFLQ) form a DNA-binding region, H-T-H motif.

Putative repressor of the endoglucanase operon. This Paenibacillus polymyxa (Bacillus polymyxa) protein is Probable HTH-type transcriptional regulator EndR (endR).